The sequence spans 704 residues: Acetate--CoA ligase [ADP-forming] (704 aa).

This sequence in the N-terminal section; belongs to the acetate CoA ligase alpha subunit family. In the C-terminal section; belongs to the acetate CoA ligase beta subunit family. Homodimer.

It carries out the reaction acetate + ATP + CoA = acetyl-CoA + ADP + phosphate. Catalyzes the formation of acetate and ATP from acetyl-CoA by using ADP and phosphate. Can also use butyryl-CoA, but not phenylacetyl-CoA. Cannot catalyze the reverse reaction. The protein is Acetate--CoA ligase [ADP-forming] of Methanocaldococcus jannaschii (strain ATCC 43067 / DSM 2661 / JAL-1 / JCM 10045 / NBRC 100440) (Methanococcus jannaschii).